The following is a 283-amino-acid chain: Bifunctional protein FolD (283 aa).

NADP(+) contacts are provided by residues 165 to 167 (GRS) and serine 190.

Belongs to the tetrahydrofolate dehydrogenase/cyclohydrolase family. As to quaternary structure, homodimer.

It carries out the reaction (6R)-5,10-methylene-5,6,7,8-tetrahydrofolate + NADP(+) = (6R)-5,10-methenyltetrahydrofolate + NADPH. The catalysed reaction is (6R)-5,10-methenyltetrahydrofolate + H2O = (6R)-10-formyltetrahydrofolate + H(+). The protein operates within one-carbon metabolism; tetrahydrofolate interconversion. In terms of biological role, catalyzes the oxidation of 5,10-methylenetetrahydrofolate to 5,10-methenyltetrahydrofolate and then the hydrolysis of 5,10-methenyltetrahydrofolate to 10-formyltetrahydrofolate. The polypeptide is Bifunctional protein FolD (Paracidovorax citrulli (strain AAC00-1) (Acidovorax citrulli)).